Reading from the N-terminus, the 540-residue chain is ATP-dependent RNA helicase DBP3 (540 aa).

Positions 1 to 35 are enriched in basic and acidic residues; it reads MTVEESKKRKLTDDVAIKQNEKKIKKDKKVKDKKD. The segment at 1–89 is disordered; it reads MTVEESKKRK…TTEQPSKQVK (89 aa). Basic residues predominate over residues 36–52; sequence KKDKKDKKDKKEKKEKK. Composition is skewed to basic and acidic residues over residues 53 to 62 and 68 to 79; these read EKKEKNDKKD and DKKAEQVDKLSE. Residues 130–156 carry the Q motif motif; the sequence is LAFNQISLDKEVQNEIAKFPKPTPIQA. The region spanning 159 to 332 is the Helicase ATP-binding domain; that stretch reads WPYLLSGKDV…STFMKEPVKV (174 aa). Position 172-179 (172-179) interacts with ATP; sequence AETGSGKT. A DEAD box motif is present at residues 279 to 282; sequence DEAD. One can recognise a Helicase C-terminal domain in the interval 361–510; the sequence is KLLDLLKKYQ…PVPEDLIKFG (150 aa).

Belongs to the DEAD box helicase family. DDX5/DBP2 subfamily.

It is found in the nucleus. Its subcellular location is the nucleolus. It catalyses the reaction ATP + H2O = ADP + phosphate + H(+). ATP-dependent RNA helicase required for 60S ribosomal subunit synthesis. Involved in efficient pre-rRNA processing, predominantly at site A3, which is necessary for the normal formation of 25S and 5.8S rRNAs. The sequence is that of ATP-dependent RNA helicase DBP3 (DBP3) from Candida glabrata (strain ATCC 2001 / BCRC 20586 / JCM 3761 / NBRC 0622 / NRRL Y-65 / CBS 138) (Yeast).